Reading from the N-terminus, the 63-residue chain is MSETATAYKLFRCLQCGFEYDEAIGWPDDGIEPGTRWDEIPEDWSCPDCGAAKVDFEMVEVDR.

In terms of domain architecture, Rubredoxin-like spans Tyr8–Val59. The Fe cation site is built by Cys13, Cys16, Cys46, and Cys49.

It belongs to the rubredoxin family. Requires Fe(3+) as cofactor.

Its function is as follows. Involved in the hydrocarbon hydroxylating system, which transfers electrons from NADH to rubredoxin reductase and then through rubredoxin to alkane 1 monooxygenase. This Rhodococcus erythropolis (Arthrobacter picolinophilus) protein is Rubredoxin-2 (rubA2).